We begin with the raw amino-acid sequence, 346 residues long: Mitogen-activated protein kinase kinase 1c (346 aa).

The Protein kinase domain maps to 70–332 (LELVRFLGKG…TTDLLKHPFL (263 aa)). ATP contacts are provided by residues 76–84 (LGKGAGGTV) and K99. D194 functions as the Proton acceptor in the catalytic mechanism.

It belongs to the protein kinase superfamily. STE Ser/Thr protein kinase family. MAP kinase kinase subfamily.

The enzyme catalyses L-seryl-[protein] + ATP = O-phospho-L-seryl-[protein] + ADP + H(+). It catalyses the reaction L-threonyl-[protein] + ATP = O-phospho-L-threonyl-[protein] + ADP + H(+). The catalysed reaction is L-tyrosyl-[protein] + ATP = O-phospho-L-tyrosyl-[protein] + ADP + H(+). In terms of biological role, the CERK1, MEKK1a/b, MKK1a/b/c and MPK4a/b proteins are involved in pathogen defense. The pathway induces rapid growth inhibition, cell wall depositions and accumulation of defense-related transcripts. This protein is required for full defense response to fungal pathogen chitin. This chain is Mitogen-activated protein kinase kinase 1c, found in Physcomitrium patens (Spreading-leaved earth moss).